Consider the following 249-residue polypeptide: uncharacterized protein (249 aa).

A helical membrane pass occupies residues 3–23; that stretch reads WYWIGLLIVVVLFLLSAVRIV.

It belongs to the band 7/mec-2 family.

It localises to the membrane. This is an uncharacterized protein from Archaeoglobus fulgidus (strain ATCC 49558 / DSM 4304 / JCM 9628 / NBRC 100126 / VC-16).